We begin with the raw amino-acid sequence, 300 residues long: tRNA dimethylallyltransferase 1 (300 aa).

Gly-10 to Thr-17 is an ATP binding site. Thr-12–Thr-17 contacts substrate. Residues Asp-35–Gln-38 form an interaction with substrate tRNA region.

It belongs to the IPP transferase family. Monomer. It depends on Mg(2+) as a cofactor.

It catalyses the reaction adenosine(37) in tRNA + dimethylallyl diphosphate = N(6)-dimethylallyladenosine(37) in tRNA + diphosphate. Its function is as follows. Catalyzes the transfer of a dimethylallyl group onto the adenine at position 37 in tRNAs that read codons beginning with uridine, leading to the formation of N6-(dimethylallyl)adenosine (i(6)A). The protein is tRNA dimethylallyltransferase 1 of Phocaeicola vulgatus (strain ATCC 8482 / DSM 1447 / JCM 5826 / CCUG 4940 / NBRC 14291 / NCTC 11154) (Bacteroides vulgatus).